The sequence spans 66 residues: Large ribosomal subunit protein bL35 (66 aa).

Basic residues-rich tracts occupy residues 1–15 (MPKL…KRFK) and 24–40 (HAQR…TKKQ). Residues 1 to 40 (MPKLKTKSGAKKRFKVTGTGKVMHAQRGKRHGMIKRTKKQ) are disordered.

This sequence belongs to the bacterial ribosomal protein bL35 family.

This chain is Large ribosomal subunit protein bL35, found in Bradyrhizobium sp. (strain ORS 278).